The sequence spans 1287 residues: DNA-directed RNA polymerase 147 kDa polypeptide (1287 aa).

This sequence belongs to the poxviridae DNA-directed RNA polymerase 147 kDa subunit family. As to quaternary structure, the DNA-dependent RNA polymerase used for intermediate and late genes expression consists of eight subunits Rpo30/OPG66, Rpo7/OPG90, Rpo22/OPG103, Rpo147/OPG105, Rpo18/OPG119, Rpo19/OPG131, Rpo132/OPG151 and Rpo35/OPG156. The same holoenzyme, with the addition of the transcription-specificity factor OPG109, is used for early gene expression.

It localises to the virion. The enzyme catalyses RNA(n) + a ribonucleoside 5'-triphosphate = RNA(n+1) + diphosphate. In terms of biological role, part of the DNA-dependent RNA polymerase which catalyzes the transcription of viral DNA into RNA using the four ribonucleoside triphosphates as substrates. Responsible for the transcription of early, intermediate and late genes. DNA-dependent RNA polymerase associates with the early transcription factor (ETF), itself composed of OPG118 and OPG133, thereby allowing the early genes transcription. Late transcription, and probably also intermediate transcription, require newly synthesized RNA polymerase. The polypeptide is DNA-directed RNA polymerase 147 kDa polypeptide (OPG105) (Bos taurus (Bovine)).